A 1212-amino-acid chain; its full sequence is DNA topoisomerase 1 (1212 aa).

One can recognise a Toprim domain in the interval 1–114; it reads MKLVVVESPA…DVERVTFNAI (114 aa). Residues Glu-7 and Asp-80 each contribute to the Mg(2+) site. A Topo IA-type catalytic domain is found at 130 to 556; it reads DNDLINAYLA…AFWHDFKPKT (427 aa). Residues 164-169 are interaction with DNA; the sequence is SAGRVQ. Tyr-293 serves as the catalytic O-(5'-phospho-DNA)-tyrosine intermediate. The C4-type zinc-finger motif lies at 592–619; it reads CPSCHTGRLALKGGRFGAFIACSNYPEC. Disordered regions lie at residues 687–742, 758–937, and 1107–1212; these read GKGN…GVST, ALAG…KARA, and RAKM…EVAE. Composition is skewed to polar residues over residues 708-742 and 770-782; these read ASST…GVST and VSDN…SSTI. Positions 815-840 are enriched in basic and acidic residues; the sequence is ADNRLLSHRNGDIDSRAIPADHKDSS. Polar residues-rich tracts occupy residues 881 to 890 and 897 to 906; these read AITSDNSPSD and STPSSATSSV. Residues 921-934 are compositionally biased toward basic and acidic residues; it reads KADEQAKEEEESRK. Residues 1109–1140 are compositionally biased toward basic residues; that stretch reads KMPKKKKTKKAAAKKPAAKKTTTKKAAPKKAT. The segment covering 1141-1151 has biased composition (low complexity); the sequence is TKTATPKSATT. Over residues 1167 to 1182 the composition is skewed to basic residues; that stretch reads PAKKAVAKKTTAKKPA. A compositionally biased stretch (low complexity) spans 1183-1199; sequence SKSATKKAPSSKTTAAK.

This sequence belongs to the type IA topoisomerase family. As to quaternary structure, monomer. The cofactor is Mg(2+).

It catalyses the reaction ATP-independent breakage of single-stranded DNA, followed by passage and rejoining.. Releases the supercoiling and torsional tension of DNA, which is introduced during the DNA replication and transcription, by transiently cleaving and rejoining one strand of the DNA duplex. Introduces a single-strand break via transesterification at a target site in duplex DNA. The scissile phosphodiester is attacked by the catalytic tyrosine of the enzyme, resulting in the formation of a DNA-(5'-phosphotyrosyl)-enzyme intermediate and the expulsion of a 3'-OH DNA strand. The free DNA strand then undergoes passage around the unbroken strand, thus removing DNA supercoils. Finally, in the religation step, the DNA 3'-OH attacks the covalent intermediate to expel the active-site tyrosine and restore the DNA phosphodiester backbone. This Zymomonas mobilis subsp. mobilis (strain ATCC 31821 / ZM4 / CP4) protein is DNA topoisomerase 1.